The primary structure comprises 171 residues: UPF0316 protein EAT1b_0871 (171 aa).

3 consecutive transmembrane segments (helical) span residues 4 to 24 (ILLI…RTIM), 32 to 52 (IAGL…GIVF), and 57 to 77 (TVGM…GGFV).

This sequence belongs to the UPF0316 family.

It localises to the cell membrane. This chain is UPF0316 protein EAT1b_0871, found in Exiguobacterium sp. (strain ATCC BAA-1283 / AT1b).